Consider the following 465-residue polypeptide: MATSKLPAVSGEEETTILMAKEELEALRTAFESGDIPQAASRLRELLASSDCTRLEVGVTGESGAGKSSLINALRGLGAEDPDAALTGVVETTIEPSPYPHPQFPDVTLWDLPGAGSPGCSADKYLKQVDFGRYDFFLLVSPRRCGAVETRLASEILRQGKKFYFVRTKVDEDLAATRMQRPSGFSEGAVLHEIREHCVERLRGAGVHDPRVFLVSNLSPARYDFPLLMSTWERDLPAHRRHAGLLSLPDISLEALQEKKDMLQEQVLKTALVSGVIQALPVPGLAAAYDDALLIRSLRGYHRSFGLDDDSLAKLAEQVGKQAGDLRSVIRSPLANEVSPETVLRLYSQSSDGAMRVARAFEKGIPVFGTLVAGGISFGTVYTMLQGCLNEMAEDAQRVRIKALEEEEDTQPDVSLEAAGDNGVEKRGSGEGSMEEAPLSTRRKLGLLLKYILDSWKKRDLAEDK.

Residues 53–235 form the IRG-type G domain; the sequence is TRLEVGVTGE…PLLMSTWERD (183 aa). GTP is bound by residues 62–69, 87–91, 169–171, and 216–218; these read ESGAGKSS, TGVVE, KVD, and SNL. A phosphoserine mark is found at Ser-247 and Ser-304. The tract at residues 405–438 is disordered; that stretch reads EEEEDTQPDVSLEAAGDNGVEKRGSGEGSMEEAP.

The protein belongs to the TRAFAC class dynamin-like GTPase superfamily. IRG family.

The protein resides in the cell projection. Its subcellular location is the cilium. The protein localises to the flagellum. It localises to the lipid droplet. It carries out the reaction GTP + H2O = GDP + phosphate + H(+). Functionally, required for sperm motility and therefore male fertility, via positive regulation of spermatozoa fibrous sheath formation. The sequence is that of Interferon-inducible GTPase 5 (IRGC) from Bos taurus (Bovine).